A 394-amino-acid polypeptide reads, in one-letter code: Elongation factor Tu 1 (394 aa).

The tr-type G domain occupies 10-204 (KPHVNVGTIG…YLDSYIPEPE (195 aa)). A G1 region spans residues 19-26 (GHVDHGKT). Residue 19–26 (GHVDHGKT) participates in GTP binding. Threonine 26 provides a ligand contact to Mg(2+). The tract at residues 60–64 (GITIN) is G2. The segment at 81-84 (DCPG) is G3. Residues 81 to 85 (DCPGH) and 136 to 139 (NKCD) each bind GTP. The tract at residues 136–139 (NKCD) is G4. The interval 174-176 (SAL) is G5.

Belongs to the TRAFAC class translation factor GTPase superfamily. Classic translation factor GTPase family. EF-Tu/EF-1A subfamily. As to quaternary structure, monomer.

The protein localises to the cytoplasm. The enzyme catalyses GTP + H2O = GDP + phosphate + H(+). In terms of biological role, GTP hydrolase that promotes the GTP-dependent binding of aminoacyl-tRNA to the A-site of ribosomes during protein biosynthesis. The sequence is that of Elongation factor Tu 1 from Yersinia enterocolitica serotype O:8 / biotype 1B (strain NCTC 13174 / 8081).